A 1232-amino-acid polypeptide reads, in one-letter code: Anion exchange protein 3 (1232 aa).

The segment covering 1–11 (MANGVIPPPGG) has biased composition (pro residues). 2 disordered regions span residues 1–316 (MANG…KLDR) and 429–498 (NDDK…GDGH). Topologically, residues 1-708 (MANGVIPPPG…DLRDALHSQC (708 aa)) are cytoplasmic. A compositionally biased stretch (basic and acidic residues) spans 58–75 (DPEKPSRSYSERDFEFHR). Composition is skewed to basic residues over residues 76 to 97 (HTSHHTHHPLSARLPPPHKLRR) and 104 to 113 (RHTRRKRKKE). The segment covering 134–152 (VEEEEEEEEEEEGESEAEP) has biased composition (acidic residues). Residues serine 167, serine 170, serine 175, and serine 198 each carry the phosphoserine modification. The segment covering 200–214 (QHSSSSPSPRAQASR) has biased composition (low complexity). The segment covering 267 to 279 (DDMKSHRLEDNPG) has biased composition (basic and acidic residues). Positions 280-289 (VRRHLVKKPS) are enriched in basic residues. Position 295 is an omega-N-methylarginine (arginine 295). Basic residues predominate over residues 305-316 (LRRKKKKKKLDR). Positions 440-450 (NPSSSSMNSVL) are enriched in polar residues. Residues 481–498 (HDPDAKEKPLHMPGGDGH) show a composition bias toward basic and acidic residues. 5 helical membrane passes run 709–731 (VAAVLFIYFAALSPAITFGGLLG), 737–774 (LMGVSELIVSTAVLGVLFSLLGAQPLLVVGFSGPLLVF), 794–816 (VWVGLWLVVFVLALVAAEGSFLV), 826–847 (IFAFLISLIFIYETFYKLYKVF), and 893–910 (ALLSLILMLGTFFIAFFL). A membrane (anion exchange) region spans residues 709–1232 (VAAVLFIYFA…DEYNELHMPV (524 aa)). At 911 to 925 (RKFRNSRFLGGKARR) the chain is on the cytoplasmic side. The next 5 helical transmembrane spans lie at 926 to 946 (IIGDFGIPISILVMVLVDYSI), 980 to 1002 (PFPPWMMVAAAVPALLVLILIFM), 1028 to 1049 (LLLIGSLGGLCGLFGLPWLTAA), 1083 to 1128 (VTGV…IQLS), and 1155 to 1191 (MHLFICIQLGCIALLWVVKSTAASLAFPFLLLLTVPL). Cysteine 1165 carries S-palmitoyl cysteine lipidation.

It belongs to the anion exchanger (TC 2.A.31) family.

The protein resides in the cell membrane. It catalyses the reaction hydrogencarbonate(in) + chloride(out) = hydrogencarbonate(out) + chloride(in). In terms of biological role, sodium-independent anion exchanger which mediates the electroneutral exchange of chloride for bicarbonate ions across the cell membrane. May be involved in the regulation of intracellular pH, and the modulation of cardiac action potential. This chain is Anion exchange protein 3 (SLC4A3), found in Pongo abelii (Sumatran orangutan).